The primary structure comprises 371 residues: Bifunctional enzyme IspD/IspF (371 aa).

The tract at residues 1–210 (MSEISLIMLA…LDLPTPSFEI (210 aa)) is 2-C-methyl-D-erythritol 4-phosphate cytidylyltransferase. The segment at 211 to 371 (FTGNGFDVHE…NLKYFDWTRL (161 aa)) is 2-C-methyl-D-erythritol 2,4-cyclodiphosphate synthase. 2 residues coordinate a divalent metal cation: Asp-217 and His-219. Residues 217 to 219 (DVH) and 243 to 244 (HS) contribute to the 4-CDP-2-C-methyl-D-erythritol 2-phosphate site. His-251 provides a ligand contact to a divalent metal cation. 4-CDP-2-C-methyl-D-erythritol 2-phosphate-binding positions include 265 to 267 (DIG), 270 to 274 (YPDTD), 341 to 344 (TTTE), Phe-348, and Arg-351.

This sequence in the N-terminal section; belongs to the IspD/TarI cytidylyltransferase family. IspD subfamily. In the C-terminal section; belongs to the IspF family. The cofactor is a divalent metal cation.

It catalyses the reaction 2-C-methyl-D-erythritol 4-phosphate + CTP + H(+) = 4-CDP-2-C-methyl-D-erythritol + diphosphate. It carries out the reaction 4-CDP-2-C-methyl-D-erythritol 2-phosphate = 2-C-methyl-D-erythritol 2,4-cyclic diphosphate + CMP. It participates in isoprenoid biosynthesis; isopentenyl diphosphate biosynthesis via DXP pathway; isopentenyl diphosphate from 1-deoxy-D-xylulose 5-phosphate: step 2/6. The protein operates within isoprenoid biosynthesis; isopentenyl diphosphate biosynthesis via DXP pathway; isopentenyl diphosphate from 1-deoxy-D-xylulose 5-phosphate: step 4/6. Its function is as follows. Bifunctional enzyme that catalyzes the formation of 4-diphosphocytidyl-2-C-methyl-D-erythritol from CTP and 2-C-methyl-D-erythritol 4-phosphate (MEP) (IspD), and catalyzes the conversion of 4-diphosphocytidyl-2-C-methyl-D-erythritol 2-phosphate (CDP-ME2P) to 2-C-methyl-D-erythritol 2,4-cyclodiphosphate (ME-CPP) with a corresponding release of cytidine 5-monophosphate (CMP) (IspF). In Campylobacter jejuni subsp. jejuni serotype O:6 (strain 81116 / NCTC 11828), this protein is Bifunctional enzyme IspD/IspF.